A 777-amino-acid polypeptide reads, in one-letter code: Glucocorticoid receptor (777 aa).

The span at 1–14 shows a compositional bias: basic and acidic residues; sequence MDSKESLTPGKEEN. Positions 1–21 are disordered; that stretch reads MDSKESLTPGKEENPSSVLTQ. The segment at 1–420 is modulating; that stretch reads MDSKESLTPG…TATTGPPPKL (420 aa). Thr8 is subject to Phosphothreonine. Arg23 carries the post-translational modification Omega-N-methylarginine. A phosphoserine mark is found at Ser45, Ser113, Ser134, and Ser141. A disordered region spans residues 130–182; that stretch reads NRSTSVPENPKSSASSSVSAAPKEKEFPKTHSDVSSEQQNLKGQTGTNGGNVK. Residues 134–150 show a composition bias toward low complexity; that stretch reads SVPENPKSSASSSVSAA. Over residues 151–163 the composition is skewed to basic and acidic residues; it reads PKEKEFPKTHSDV. Residues 164–174 show a composition bias toward polar residues; that stretch reads SSEQQNLKGQT. Residues Ser203, Ser211, and Ser226 each carry the phosphoserine modification. Lys258 is covalently cross-linked (Glycyl lysine isopeptide (Lys-Gly) (interchain with G-Cter in SUMO2)). Phosphoserine is present on Ser267. Residues Lys277 and Lys293 each participate in a glycyl lysine isopeptide (Lys-Gly) (interchain with G-Cter in SUMO); alternate cross-link. Glycyl lysine isopeptide (Lys-Gly) (interchain with G-Cter in SUMO2); alternate cross-links involve residues Lys277 and Lys293. Low complexity predominate over residues 394–414; sequence SSPSMRPDVSSPPSSSSTATT. The tract at residues 394 to 415 is disordered; that stretch reads SSPSMRPDVSSPPSSSSTATTG. Ser404 carries the phosphoserine modification. Lys419 is covalently cross-linked (Glycyl lysine isopeptide (Lys-Gly) (interchain with G-Cter in ubiquitin)). 2 NR C4-type zinc fingers span residues 421–441 and 457–481; these read CLVC…CGSC and CAGR…YRKC. The nuclear receptor DNA-binding region spans 421–486; it reads CLVCSDEASG…RYRKCLQAGM (66 aa). Lys480, Lys492, Lys494, and Lys495 each carry N6-acetyllysine. The interval 485–777 is interaction with CLOCK; that stretch reads GMNLEARKTK…NIKKLLFHQK (293 aa). Residues 487–523 are hinge; it reads NLEARKTKKKIKGIQQATTGVSQETSENPANKTIVPA. Positions 524–758 constitute an NR LBD domain; it reads TLPQLTPTLV…FPEMLAEIIT (235 aa). The interval 532–697 is interaction with CRY1; that stretch reads LVSLLEVIEP…EIRMTYIKEL (166 aa). A Glycyl lysine isopeptide (Lys-Gly) (interchain with G-Cter in SUMO) cross-link involves residue Lys703.

This sequence belongs to the nuclear hormone receptor family. NR3 subfamily. Heteromultimeric cytoplasmic complex with HSP90AA1, HSPA1A/HSPA1B, and FKBP5 or another immunophilin such as PPID, STIP1, or the immunophilin homolog PPP5C. Upon ligand binding FKBP5 dissociates from the complex and FKBP4 takes its place, thereby linking the complex to dynein and mediating transport to the nucleus, where the complex dissociates. Probably forms a complex composed of chaperones HSP90 and HSP70, co-chaperones CDC37, PPP5C, TSC1 and client protein TSC2, CDK4, AKT, RAF1 and NR3C1; this complex does not contain co-chaperones STIP1/HOP and PTGES3/p23. Directly interacts with UNC45A. Binds to DNA as a homodimer, and as heterodimer with NR3C2 or the retinoid X receptor. Binds STAT5A and STAT5B homodimers and heterodimers. Interacts with NRIP1, POU2F1, POU2F2 and TRIM28. Interacts with several coactivator complexes, including the SMARCA4 complex, CREBBP/EP300, TADA2L (Ada complex) and p160 coactivators such as NCOA2 and NCOA6. Interaction with BAG1 inhibits transactivation. Interacts with HEXIM1 and TGFB1I1. Interacts with NCOA1. Interacts with NCOA3, SMARCA4, SMARCC1, SMARCD1, and SMARCE1. Interacts with CLOCK, CRY1 and CRY2 in a ligand-dependent fashion. Interacts with CIART. Interacts with RWDD3. Interacts with UBE2I/UBC9 and this interaction is enhanced in the presence of RWDD3. Interacts with GRIP1. Interacts with NR4A3 (via nuclear receptor DNA-binding domain), represses transcription activity of NR4A3 on the POMC promoter Nur response element (NurRE). Directly interacts with PNRC2 to attract and form a complex with UPF1 and DCP1A; the interaction leads to rapid mRNA degradation. Interacts with GSK3B. Interacts with FNIP1 and FNIP2. Interacts (via C-terminus) with HNRNPU (via C-terminus). Interacts with MCM3AP. Interacts (via domain NR LBD) with HSP90AA1 and HSP90AB1. In the absence of hormonal ligand, interacts with TACC1. Interacts (via NR LBD domain) with ZNF764 (via KRAB domain); the interaction regulates transcription factor activity of NR3C1 by directing its actions toward certain biologic pathways. Post-translationally, acetylation by CLOCK reduces its binding to glucocorticoid response elements and its transcriptional activity. Increased proteasome-mediated degradation in response to glucocorticoids. In terms of processing, phosphorylated in the absence of hormone; becomes hyperphosphorylated in the presence of glucocorticoid. The Ser-203, Ser-226 and Ser-404-phosphorylated forms are mainly cytoplasmic, and the Ser-211-phosphorylated form is nuclear. Phosphorylation at Ser-211 increases transcriptional activity. Phosphorylation at Ser-203, Ser-226 and Ser-404 decreases signaling capacity. Phosphorylation at Ser-404 may protect from glucocorticoid-induced apoptosis. Phosphorylation at Ser-203 and Ser-211 is not required in regulation of chromosome segregation. May be dephosphorylated by PPP5C, attenuates NR3C1 action. Post-translationally, ubiquitinated by UBR5, leading to its degradation: UBR5 specifically recognizes and binds ligand-bound NR3C1 when it is not associated with coactivators (NCOAs). In presence of NCOAs, the UBR5-degron is not accessible, preventing its ubiquitination and degradation. Sumoylation at Lys-277 and Lys-293 negatively regulates its transcriptional activity. Sumoylation at Lys-703 positively regulates its transcriptional activity in the presence of RWDD3. Sumoylation at Lys-277 and Lys-293 is dispensable whereas sumoylation at Lys-703 is critical for the stimulatory effect of RWDD3 on its transcriptional activity. Heat shock increases sumoylation in a RWDD3-dependent manner. As to expression, within the infant and adult hippocampal formation, highest expression observed in the DG granule cell layer with moderate levels in the DG hilus, the CA2-CA4 pyramidal cell layer and the proximal part of the CA1 pyramidal cell layer. Moderate to high expression levels found in the presubiculum and in its' superficial layers. Weak but specific expression detected throughout the entire corticle mantle. In the amygdala, moderate levels were detected in the lateral, central and medial nuclei. Moderate expression levels were present in the PVNh alongside the third ventricle.

It is found in the cytoplasm. The protein localises to the nucleus. It localises to the mitochondrion. The protein resides in the cytoskeleton. Its subcellular location is the spindle. It is found in the microtubule organizing center. The protein localises to the centrosome. It localises to the chromosome. The protein resides in the nucleoplasm. In terms of biological role, receptor for glucocorticoids (GC). Has a dual mode of action: as a transcription factor that binds to glucocorticoid response elements (GRE), both for nuclear and mitochondrial DNA, and as a modulator of other transcription factors. Affects inflammatory responses, cellular proliferation and differentiation in target tissues. Involved in chromatin remodeling. Plays a role in rapid mRNA degradation by binding to the 5' UTR of target mRNAs and interacting with PNRC2 in a ligand-dependent manner which recruits the RNA helicase UPF1 and the mRNA-decapping enzyme DCP1A, leading to RNA decay. Could act as a coactivator for STAT5-dependent transcription upon growth hormone (GH) stimulation and could reveal an essential role of hepatic GR in the control of body growth. Mediates glucocorticoid-induced apoptosis. Promotes accurate chromosome segregation during mitosis. May act as a tumor suppressor. May play a negative role in adipogenesis through the regulation of lipolytic and antilipogenic gene expression. This Callithrix jacchus (White-tufted-ear marmoset) protein is Glucocorticoid receptor (NR3C1).